The primary structure comprises 475 residues: 3-hydroxyacyl-CoA dehydrogenase-like protein LAM1 (475 aa).

99–104 (GTRPFA) is a binding site for NAD(+). Position 149 (Lys-149) interacts with CoA. Asn-245 provides a ligand contact to NAD(+).

Belongs to the 3-hydroxyacyl-CoA dehydrogenase family.

The protein operates within mycotoxin biosynthesis. In terms of biological role, 3-hydroxyacyl-CoA dehydrogenase-like protein; part of the Tox1A locus, one of the 2 loci that mediate the biosynthesis of T-toxin, a family of linear polyketides 37 to 45 carbons in length, of which the major component is 41 carbons, and which leads to high virulence to maize. One of the PKSs (PKS1 or PKS2) could synthesize a precursor, used subsequently by the other PKS as starter unit, to add additional carbons. Variability in the length of the final carbon backbone C35-47 could be achieved by varying the number of condensation cycles, or use of different starter or extender units or might be due to decarboxylation of the penultimate product, catalyzed by DEC1. Additional proteins are required for the biosynthesis of T-toxin, including oxidoreductases RED1, RED2, RED3, LAM1 and OXI1, as well as esterase TOX9. The sequence is that of 3-hydroxyacyl-CoA dehydrogenase-like protein LAM1 from Cochliobolus heterostrophus (strain C4 / ATCC 48331 / race T) (Southern corn leaf blight fungus).